The sequence spans 452 residues: COBRA-like protein 1 (452 aa).

Positions 1 to 33 (MGFFLCSSSSIFFKFGISIIFLVSFSGLTPSEA) are cleaved as a signal peptide. 9 N-linked (GlcNAc...) asparagine glycosylation sites follow: asparagine 42, asparagine 167, asparagine 175, asparagine 214, asparagine 239, asparagine 254, asparagine 323, asparagine 338, and asparagine 357. A lipid anchor (GPI-anchor amidated serine) is attached at serine 432. A propeptide spans 433 to 452 (VGSLFAAMALLLIVFLHGNL) (removed in mature form).

It belongs to the COBRA family. Expressed in roots, stems, leaves, flowers and siliques.

It localises to the cell membrane. The chain is COBRA-like protein 1 (COBL1) from Arabidopsis thaliana (Mouse-ear cress).